A 336-amino-acid polypeptide reads, in one-letter code: Aspartate carbamoyltransferase catalytic subunit (336 aa).

2 residues coordinate carbamoyl phosphate: Arg-72 and Thr-73. Lys-100 contributes to the L-aspartate binding site. Residues Arg-122, His-155, and Gln-158 each coordinate carbamoyl phosphate. The L-aspartate site is built by Arg-188 and Arg-242. The carbamoyl phosphate site is built by Gly-288 and Pro-289.

It belongs to the aspartate/ornithine carbamoyltransferase superfamily. ATCase family. In terms of assembly, heterododecamer (2C3:3R2) of six catalytic PyrB chains organized as two trimers (C3), and six regulatory PyrI chains organized as three dimers (R2).

It carries out the reaction carbamoyl phosphate + L-aspartate = N-carbamoyl-L-aspartate + phosphate + H(+). Its pathway is pyrimidine metabolism; UMP biosynthesis via de novo pathway; (S)-dihydroorotate from bicarbonate: step 2/3. Catalyzes the condensation of carbamoyl phosphate and aspartate to form carbamoyl aspartate and inorganic phosphate, the committed step in the de novo pyrimidine nucleotide biosynthesis pathway. This Lactobacillus leichmannii protein is Aspartate carbamoyltransferase catalytic subunit.